The chain runs to 231 residues: Heptaprenylglyceryl phosphate synthase (231 aa).

Lys12 provides a ligand contact to sn-glycerol 1-phosphate. Mg(2+) is bound by residues Asp14 and Thr40. Residues 159-164, Gly189, and 209-210 contribute to the sn-glycerol 1-phosphate site; these read YMEYSG and GN.

The protein belongs to the GGGP/HepGP synthase family. Group I subfamily. In terms of assembly, homodimer. The cofactor is Mg(2+).

It carries out the reaction sn-glycerol 1-phosphate + all-trans-heptaprenyl diphosphate = 3-heptaprenyl-sn-glycero-1-phosphate + diphosphate. It functions in the pathway membrane lipid metabolism; glycerophospholipid metabolism. Prenyltransferase that catalyzes in vivo the transfer of the heptaprenyl moiety of heptaprenyl pyrophosphate (HepPP; 35 carbon atoms) to the C3 hydroxyl of sn-glycerol-1-phosphate (G1P), producing heptaprenylglyceryl phosphate (HepGP). This reaction is an ether-bond-formation step in the biosynthesis of archaea-type G1P-based membrane lipids found in Bacillales. The protein is Heptaprenylglyceryl phosphate synthase of Anoxybacillus flavithermus (strain DSM 21510 / WK1).